Consider the following 400-residue polypeptide: Nicotinate phosphoribosyltransferase (400 aa).

At His220 the chain carries Phosphohistidine; by autocatalysis.

It belongs to the NAPRTase family. In terms of processing, transiently phosphorylated on a His residue during the reaction cycle. Phosphorylation strongly increases the affinity for substrates and increases the rate of nicotinate D-ribonucleotide production. Dephosphorylation regenerates the low-affinity form of the enzyme, leading to product release.

The enzyme catalyses nicotinate + 5-phospho-alpha-D-ribose 1-diphosphate + ATP + H2O = nicotinate beta-D-ribonucleotide + ADP + phosphate + diphosphate. The protein operates within cofactor biosynthesis; NAD(+) biosynthesis; nicotinate D-ribonucleotide from nicotinate: step 1/1. Catalyzes the synthesis of beta-nicotinate D-ribonucleotide from nicotinate and 5-phospho-D-ribose 1-phosphate at the expense of ATP. The chain is Nicotinate phosphoribosyltransferase from Salmonella schwarzengrund (strain CVM19633).